The sequence spans 173 residues: Small ribosomal subunit protein uS5 (173 aa).

Positions 16 to 79 (LSELLVSVRR…NAAKKNMIRV (64 aa)) constitute an S5 DRBM domain.

The protein belongs to the universal ribosomal protein uS5 family. In terms of assembly, part of the 30S ribosomal subunit. Contacts proteins S4 and S8.

In terms of biological role, with S4 and S12 plays an important role in translational accuracy. Located at the back of the 30S subunit body where it stabilizes the conformation of the head with respect to the body. In Anaplasma phagocytophilum (strain HZ), this protein is Small ribosomal subunit protein uS5.